Reading from the N-terminus, the 371-residue chain is RNA-binding protein 48 (371 aa).

The region spanning 46 to 124 (QYLLIQGVPA…GLLHVCYAPE (79 aa)) is the RRM domain. 2 disordered regions span residues 157-191 (KPVP…PESP) and 348-371 (VPKP…RRRI). Positions 158-170 (PVPEQKGTKDSRQ) are enriched in basic and acidic residues.

This sequence belongs to the RBM48 family. As to quaternary structure, component of the minor spliceosome. Within this complex, interacts with ARMC7 and PRPF8/PRP8.

Its function is as follows. As a component of the minor spliceosome, involved in the splicing of U12-type introns in pre-mRNAs. The chain is RNA-binding protein 48 (Rbm48) from Mus musculus (Mouse).